Here is a 602-residue protein sequence, read N- to C-terminus: Elongation factor 4 (602 aa).

In terms of domain architecture, tr-type G spans 8-190; sequence DLIRNFSIVA…AIVHRLPPPK (183 aa). Residues 20 to 25 and 137 to 140 each bind GTP; these read DHGKST and NKID.

The protein belongs to the TRAFAC class translation factor GTPase superfamily. Classic translation factor GTPase family. LepA subfamily.

The protein localises to the cell inner membrane. It carries out the reaction GTP + H2O = GDP + phosphate + H(+). Required for accurate and efficient protein synthesis under certain stress conditions. May act as a fidelity factor of the translation reaction, by catalyzing a one-codon backward translocation of tRNAs on improperly translocated ribosomes. Back-translocation proceeds from a post-translocation (POST) complex to a pre-translocation (PRE) complex, thus giving elongation factor G a second chance to translocate the tRNAs correctly. Binds to ribosomes in a GTP-dependent manner. This chain is Elongation factor 4, found in Cereibacter sphaeroides (strain ATCC 17023 / DSM 158 / JCM 6121 / CCUG 31486 / LMG 2827 / NBRC 12203 / NCIMB 8253 / ATH 2.4.1.) (Rhodobacter sphaeroides).